The sequence spans 146 residues: D-aminoacyl-tRNA deacylase (146 aa).

A Gly-cisPro motif, important for rejection of L-amino acids motif is present at residues 137 to 138 (GP).

This sequence belongs to the DTD family. In terms of assembly, homodimer.

It localises to the cytoplasm. It carries out the reaction glycyl-tRNA(Ala) + H2O = tRNA(Ala) + glycine + H(+). The enzyme catalyses a D-aminoacyl-tRNA + H2O = a tRNA + a D-alpha-amino acid + H(+). Its function is as follows. An aminoacyl-tRNA editing enzyme that deacylates mischarged D-aminoacyl-tRNAs. Also deacylates mischarged glycyl-tRNA(Ala), protecting cells against glycine mischarging by AlaRS. Acts via tRNA-based rather than protein-based catalysis; rejects L-amino acids rather than detecting D-amino acids in the active site. By recycling D-aminoacyl-tRNA to D-amino acids and free tRNA molecules, this enzyme counteracts the toxicity associated with the formation of D-aminoacyl-tRNA entities in vivo and helps enforce protein L-homochirality. The protein is D-aminoacyl-tRNA deacylase of Shouchella clausii (strain KSM-K16) (Alkalihalobacillus clausii).